Consider the following 309-residue polypeptide: Ribosomal RNA small subunit methyltransferase H (309 aa).

S-adenosyl-L-methionine-binding positions include Gly33–His35, Asp53, Phe79, Asp100, and Gln107.

This sequence belongs to the methyltransferase superfamily. RsmH family.

It localises to the cytoplasm. It catalyses the reaction cytidine(1402) in 16S rRNA + S-adenosyl-L-methionine = N(4)-methylcytidine(1402) in 16S rRNA + S-adenosyl-L-homocysteine + H(+). Functionally, specifically methylates the N4 position of cytidine in position 1402 (C1402) of 16S rRNA. The sequence is that of Ribosomal RNA small subunit methyltransferase H from Clostridium botulinum (strain Okra / Type B1).